Consider the following 145-residue polypeptide: Large ribosomal subunit protein uL13 (145 aa).

It belongs to the universal ribosomal protein uL13 family. As to quaternary structure, part of the 50S ribosomal subunit. Binds to Obg (AC P20964).

Its function is as follows. This protein is one of the early assembly proteins of the 50S ribosomal subunit, although it is not seen to bind rRNA by itself. It is important during the early stages of 50S assembly. This chain is Large ribosomal subunit protein uL13, found in Bacillus subtilis (strain 168).